A 1273-amino-acid polypeptide reads, in one-letter code: DNA-directed RNA polymerase subunit beta (1273 aa).

This sequence belongs to the RNA polymerase beta chain family. In terms of assembly, the RNAP catalytic core consists of 2 alpha, 1 beta, 1 beta' and 1 omega subunit. When a sigma factor is associated with the core the holoenzyme is formed, which can initiate transcription.

It catalyses the reaction RNA(n) + a ribonucleoside 5'-triphosphate = RNA(n+1) + diphosphate. In terms of biological role, DNA-dependent RNA polymerase catalyzes the transcription of DNA into RNA using the four ribonucleoside triphosphates as substrates. The protein is DNA-directed RNA polymerase subunit beta of Onion yellows phytoplasma (strain OY-M).